Here is a 409-residue protein sequence, read N- to C-terminus: Argininosuccinate synthase (409 aa).

ATP is bound by residues Ala10–Ser18 and Ala37. Positions 90 and 95 each coordinate L-citrulline. ATP is bound at residue Gly120. Residues Thr122, Asn126, and Asp127 each coordinate L-aspartate. An L-citrulline-binding site is contributed by Asn126. L-citrulline-binding residues include Arg130, Ser182, Ser191, Glu267, and Tyr279.

The protein belongs to the argininosuccinate synthase family. Type 1 subfamily. Homotetramer.

The protein localises to the cytoplasm. The catalysed reaction is L-citrulline + L-aspartate + ATP = 2-(N(omega)-L-arginino)succinate + AMP + diphosphate + H(+). Its pathway is amino-acid biosynthesis; L-arginine biosynthesis; L-arginine from L-ornithine and carbamoyl phosphate: step 2/3. The protein is Argininosuccinate synthase of Azoarcus sp. (strain BH72).